The chain runs to 382 residues: Acetylxylan esterase A (382 aa).

The first 21 residues, 1–21 (MKSLSFSFLVTLFLYLTLSSA), serve as a signal peptide directing secretion. Residues 22-31 (RTLGKDVNKR) constitute a propeptide that is removed on maturation. The catalytic stretch occupies residues 35 to 307 (GSLQQVTGFG…GAKDMEWFGF (273 aa)). N-linked (GlcNAc...) asparagine glycosylation occurs at N46. S152 functions as the Charge relay system in the catalytic mechanism. N194 carries N-linked (GlcNAc...) asparagine glycosylation. A ser/Thr-rich linker region spans residues 308–345 (SGSGSSSTTTASATKTSTTSTTSTKTTSSTSSTTTSST). Low complexity predominate over residues 313–345 (SSTTTASATKTSTTSTTSTKTTSSTSSTTTSST). The disordered stretch occupies residues 313 to 346 (SSTTTASATKTSTTSTTSTKTTSSTSSTTTSSTG). A CBM1 domain is found at 346 to 382 (GVAAHWGQCGGSGWTGPTVCESGYTCTYSNAWYSQCL).

This sequence belongs to the carbohydrate esterase 1 (CE1) family. AxeA subfamily. As to quaternary structure, monomer. In terms of processing, glycosylated.

It is found in the secreted. The enzyme catalyses Deacetylation of xylans and xylo-oligosaccharides.. It participates in glycan degradation; xylan degradation. With respect to regulation, inactivated by phenylmethylsulfonylfluorid (PMSF), a specific inhibitor of serine esterases. Acetylxylan esterase involved in the hydrolysis of xylan, a major structural heterogeneous polysaccharide found in plant biomass representing the second most abundant polysaccharide in the biosphere, after cellulose. Degrades acetylated xylans by cleaving acetyl side groups from the hetero-xylan backbone. This Talaromyces purpureogenus (Soft rot fungus) protein is Acetylxylan esterase A (axeA).